Here is a 557-residue protein sequence, read N- to C-terminus: E3 ubiquitin-protein ligase ARIH1 (557 aa).

A compositionally biased stretch (acidic residues) spans 1–47 (MDSDEGYNYEFDEDEECSEEDSGAEEEEDEDDDEPDDDTLDLGEVEL). Positions 1 to 95 (MDSDEGYNYE…GGGGGPGHEQ (95 aa)) are disordered. Residues 65–92 (ETGGGGGSALGPGGGGGGGGGGGGGGPG) are compositionally biased toward gly residues. The interval 105–153 (TAEQILQHMVECIREVNEVIQNPATITRILLSHFNWDKEKLMERYFDGN) is UBA-like. Residue lysine 142 is modified to N6-acetyllysine. The interval 182–393 (QDMPCQICYL…SAWYNCNRYN (212 aa)) is TRIAD supradomain. Zn(2+) contacts are provided by cysteine 186, cysteine 189, cysteine 203, histidine 205, cysteine 208, cysteine 211, cysteine 231, cysteine 236, cysteine 276, cysteine 281, cysteine 297, cysteine 299, cysteine 304, cysteine 307, histidine 312, cysteine 317, cysteine 344, and cysteine 347. Residues 186–236 (CQICYLNYPNSYFTGLECGHKFCMQCWSEYLTTKIMEEGMGQTISCPAHGC) form an RING-type 1 zinc finger. The segment at 256–317 (LKYQHLITNS…GENWHDPVKC (62 aa)) adopts an IBR-type zinc-finger fold. The RING-type 2; atypical zinc-finger motif lies at 344–375 (CPKCHVTIEKDGGCNHMVCRNQNCKAEFCWVC). Cysteine 357 is a catalytic residue. Cysteine 362, cysteine 367, cysteine 372, cysteine 375, histidine 382, and cysteine 389 together coordinate Zn(2+). The ariadne domain stretch occupies residues 408–557 (RAALQRYLFY…EKDLWEYIED (150 aa)).

This sequence belongs to the RBR family. Ariadne subfamily. Interacts (via the first RING-type zinc finger) with UBE2L3. Associates with cullin-RING ubiquitin ligase (CRL) complexes containing CUL1, CUL2 and CUL3. Interacts with neddylated CUL1. Interacts with neddylated CUL2. Interacts with neddylated CUL3. Interacts with neddylated CUL4A. In terms of tissue distribution, widely expressed.

It is found in the cytoplasm. The protein localises to the nucleus. Its subcellular location is the cajal body. The enzyme catalyses [E2 ubiquitin-conjugating enzyme]-S-ubiquitinyl-L-cysteine + [acceptor protein]-L-lysine = [E2 ubiquitin-conjugating enzyme]-L-cysteine + [acceptor protein]-N(6)-ubiquitinyl-L-lysine.. Its pathway is protein modification; protein ubiquitination. Its activity is regulated as follows. Autoinhibited by the ariadne domain, which masks the second RING-type zinc finger that contains the active site and inhibits the E3 activity. Inhibition is relieved upon binding to neddylated cullin-RING ubiquitin ligase complexes, which activate the E3 ligase activity of ARIH1. In terms of biological role, E3 ubiquitin-protein ligase, which catalyzes ubiquitination of target proteins together with ubiquitin-conjugating enzyme E2 UBE2L3. Acts as an atypical E3 ubiquitin-protein ligase by working together with cullin-RING ubiquitin ligase (CRL) complexes and initiating ubiquitination of CRL substrates: associates with CRL complexes and specifically mediates addition of the first ubiquitin on CRLs targets. The initial ubiquitin is then elongated by CDC34/UBE2R1 and UBE2R2. E3 ubiquitin-protein ligase activity is activated upon binding to neddylated cullin-RING ubiquitin ligase complexes. Plays a role in protein translation in response to DNA damage by mediating ubiquitination of EIF4E2, the consequences of EIF4E2 ubiquitination are however unclear. According to a report, EIF4E2 ubiquitination leads to promote EIF4E2 cap-binding and protein translation arrest. According to another report EIF4E2 ubiquitination leads to its subsequent degradation. Acts as the ligase involved in ISGylation of EIF4E2. In vitro, controls the degradation of the LINC (LInker of Nucleoskeleton and Cytoskeleton) complex member SUN2 and may therefore have a role in the formation and localization of the LINC complex, and as a consequence, nuclear subcellular localization and nuclear morphology. This Homo sapiens (Human) protein is E3 ubiquitin-protein ligase ARIH1.